The sequence spans 577 residues: Arginine--tRNA ligase (577 aa).

A 'HIGH' region motif is present at residues 122 to 132 (PNVAKEMHVGH).

The protein belongs to the class-I aminoacyl-tRNA synthetase family. As to quaternary structure, monomer.

The protein resides in the cytoplasm. The enzyme catalyses tRNA(Arg) + L-arginine + ATP = L-arginyl-tRNA(Arg) + AMP + diphosphate. The sequence is that of Arginine--tRNA ligase from Salmonella choleraesuis (strain SC-B67).